The sequence spans 246 residues: MADS-box protein EJ2 (246 aa).

The 61-residue stretch at 1–61 (MGRGRVELKR…GKLYEFCSTS (61 aa)) folds into the MADS-box domain. The K-box domain maps to 87–177 (TQNNYHEYLR…RRKLEESVAG (91 aa)).

Its subcellular location is the nucleus. Functionally, MADS-box transcription factor that acts redundantly with J2 to control meristem maturation and inflorescence architecture. The polypeptide is MADS-box protein EJ2 (Solanum lycopersicum (Tomato)).